Here is a 385-residue protein sequence, read N- to C-terminus: Rhomboid domain-containing protein 3 (385 aa).

5 helical membrane-spanning segments follow: residues alanine 13 to alanine 33, leucine 58 to tryptophan 78, serine 93 to serine 113, tryptophan 146 to leucine 166, and leucine 168 to leucine 188. The region spanning serine 322–glycine 361 is the UBA domain.

It is found in the membrane. The polypeptide is Rhomboid domain-containing protein 3 (Rhbdd3) (Rattus norvegicus (Rat)).